The chain runs to 125 residues: Crustacean hyperglycemic hormones 5 (125 aa).

A signal peptide spans 1–34 (MKPGNTSFNMVSFRMVWTAMMATLLVAGASSAGT). 3 disulfides stabilise this stretch: C58–C94, C74–C90, and C77–C103. A Valine amide modification is found at V123.

It belongs to the arthropod CHH/MIH/GIH/VIH hormone family. As to expression, produced by the medulla terminalis X-organ in the eyestalks and transported to the sinus gland where they are stored and released.

It is found in the secreted. In terms of biological role, hormone found in the sinus gland of isopods and decapods which controls the blood sugar level. Has a secretagogue action over the amylase released from the midgut gland. May act as a stress hormone and may be involved in the control of molting and reproduction. The protein is Crustacean hyperglycemic hormones 5 of Penaeus japonicus (Kuruma prawn).